A 317-amino-acid polypeptide reads, in one-letter code: Peroxisome biogenesis protein 7 (317 aa).

6 WD repeats span residues Asp58–Pro98, Glu104–Thr144, Glu147–Ile187, Ala190–Ala230, Gly234–Gly274, and His278–Ser317.

This sequence belongs to the WD repeat peroxin-7 family. Interacts with PEX5; interaction only takes place when PEX7 is associated with cargo proteins. Interacts with PEX13 (via N-terminus) and PEX12 (via C-terminus), but not with PEX14. In terms of tissue distribution, expressed in siliques and leaves, but barely detectable in flowers, stems and roots.

It localises to the cytoplasm. It is found in the cytosol. Its subcellular location is the peroxisome matrix. Functionally, receptor required for the peroxisomal import of proteins containing a C-terminal PTS2-type peroxisomal targeting signal. Specifically binds to cargo proteins containing a PTS2 peroxisomal targeting signal in the cytosol. Cargo protein-binding triggers interaction with PEX5 and formation of a ternary complex composed of PEX5 and PEX7 along with PTS2-containing cargo proteins, which is tranlocated into peroxisomes by passing through the PEX13-PEX14 docking complex. The chain is Peroxisome biogenesis protein 7 (PEX7) from Arabidopsis thaliana (Mouse-ear cress).